Reading from the N-terminus, the 443-residue chain is Chromosomal replication initiator protein DnaA (443 aa).

The domain I, interacts with DnaA modulators stretch occupies residues 1 to 73; sequence MYGDHRQIWE…YDAASKATNK (73 aa). The tract at residues 73–106 is domain II; it reads KLYEIKILSEDEEEYREIKESIEKENLTESTTLS. The segment at 107-323 is domain III, AAA+ region; that stretch reads TLNPKYTFDT…GALIRIVAFS (217 aa). ATP-binding residues include G151, G153, K154, and T155. Positions 324-443 are domain IV, binds dsDNA; the sequence is NLTKANIDLE…EELKKRIKGY (120 aa).

Belongs to the DnaA family. In terms of assembly, oligomerizes as a right-handed, spiral filament on DNA at oriC.

Its subcellular location is the cytoplasm. Its function is as follows. Plays an essential role in the initiation and regulation of chromosomal replication. ATP-DnaA binds to the origin of replication (oriC) to initiate formation of the DNA replication initiation complex once per cell cycle. Binds the DnaA box (a 9 base pair repeat at the origin) and separates the double-stranded (ds)DNA. Forms a right-handed helical filament on oriC DNA; dsDNA binds to the exterior of the filament while single-stranded (ss)DNA is stabiized in the filament's interior. The ATP-DnaA-oriC complex binds and stabilizes one strand of the AT-rich DNA unwinding element (DUE), permitting loading of DNA polymerase. After initiation quickly degrades to an ADP-DnaA complex that is not apt for DNA replication. Binds acidic phospholipids. This chain is Chromosomal replication initiator protein DnaA, found in Thermoanaerobacter pseudethanolicus (strain ATCC 33223 / 39E) (Clostridium thermohydrosulfuricum).